Here is a 536-residue protein sequence, read N- to C-terminus: Coilin (536 aa).

Residues 96 to 316 (AETCNDGAQN…QHSQSPTSDS (221 aa)) are disordered. Over residues 171-180 (KTHKGKRTKK) the composition is skewed to basic residues. Residues 181 to 192 (KSEAPIENPPDK) show a composition bias toward basic and acidic residues. The segment covering 213-238 (QTSSSDSSDTSSCSDQPTPTTQQKPQ) has biased composition (low complexity). 2 stretches are compositionally biased toward polar residues: residues 239–257 (SSAK…THSV) and 303–316 (THIQ…TSDS). A run of 2 repeats spans residues 353–358 (RGRGRG) and 380–385 (RGRGRG). Residues 353–385 (RGRGRGEDFSWRGQRGRWFRGQGNNSNRGRGRG) are 2 X 6 AA repeats of R-G-R-G-R-G. Positions 368 to 387 (GRWFRGQGNNSNRGRGRGDS) are disordered. Over residues 371 to 380 (FRGQGNNSNR) the composition is skewed to low complexity. The region spanning 425–523 (DYSSLPLLAA…VMLNWNTLIE (99 aa)) is the Tudor; atypical domain.

The protein belongs to the coilin family. As to expression, expressed in both oocytes and somatic cells.

Its subcellular location is the nucleus. The polypeptide is Coilin (coil) (Xenopus laevis (African clawed frog)).